A 157-amino-acid polypeptide reads, in one-letter code: 2-C-methyl-D-erythritol 2,4-cyclodiphosphate synthase (157 aa).

Residues Asp-8 and His-10 each contribute to the a divalent metal cation site. 4-CDP-2-C-methyl-D-erythritol 2-phosphate contacts are provided by residues Asp-8 to His-10 and His-34 to Ser-35. His-42 is an a divalent metal cation binding site. Residues Asp-56 to Gly-58, Phe-61 to Asp-65, Ala-100 to Ala-106, Thr-132 to Glu-135, Phe-139, and Arg-142 contribute to the 4-CDP-2-C-methyl-D-erythritol 2-phosphate site.

The protein belongs to the IspF family. In terms of assembly, homotrimer. Requires a divalent metal cation as cofactor.

The catalysed reaction is 4-CDP-2-C-methyl-D-erythritol 2-phosphate = 2-C-methyl-D-erythritol 2,4-cyclic diphosphate + CMP. It functions in the pathway isoprenoid biosynthesis; isopentenyl diphosphate biosynthesis via DXP pathway; isopentenyl diphosphate from 1-deoxy-D-xylulose 5-phosphate: step 4/6. In terms of biological role, involved in the biosynthesis of isopentenyl diphosphate (IPP) and dimethylallyl diphosphate (DMAPP), two major building blocks of isoprenoid compounds. Catalyzes the conversion of 4-diphosphocytidyl-2-C-methyl-D-erythritol 2-phosphate (CDP-ME2P) to 2-C-methyl-D-erythritol 2,4-cyclodiphosphate (ME-CPP) with a corresponding release of cytidine 5-monophosphate (CMP). The protein is 2-C-methyl-D-erythritol 2,4-cyclodiphosphate synthase of Photobacterium profundum (strain SS9).